The primary structure comprises 244 residues: Acetoacetate decarboxylase (244 aa).

The Schiff-base intermediate with acetoacetate role is filled by Lys115.

Belongs to the ADC family. As to quaternary structure, homododecamer.

The enzyme catalyses acetoacetate + H(+) = acetone + CO2. Its function is as follows. Catalyzes the conversion of acetoacetate to acetone and carbon dioxide. The chain is Acetoacetate decarboxylase from Clostridium acetobutylicum (strain ATCC 824 / DSM 792 / JCM 1419 / IAM 19013 / LMG 5710 / NBRC 13948 / NRRL B-527 / VKM B-1787 / 2291 / W).